A 296-amino-acid polypeptide reads, in one-letter code: Diaminopimelate epimerase (296 aa).

Substrate is bound by residues Asn-17, Gln-49, and Asn-69. Cys-78 serves as the catalytic Proton donor. Residues 79–80, Asn-171, Asn-205, and 223–224 contribute to the substrate site; these read GN and ER. Catalysis depends on Cys-232, which acts as the Proton acceptor. 233–234 lines the substrate pocket; it reads GT.

It belongs to the diaminopimelate epimerase family. In terms of assembly, homodimer.

Its subcellular location is the cytoplasm. The catalysed reaction is (2S,6S)-2,6-diaminopimelate = meso-2,6-diaminopimelate. The protein operates within amino-acid biosynthesis; L-lysine biosynthesis via DAP pathway; DL-2,6-diaminopimelate from LL-2,6-diaminopimelate: step 1/1. In terms of biological role, catalyzes the stereoinversion of LL-2,6-diaminopimelate (L,L-DAP) to meso-diaminopimelate (meso-DAP), a precursor of L-lysine and an essential component of the bacterial peptidoglycan. The sequence is that of Diaminopimelate epimerase from Methylorubrum extorquens (strain CM4 / NCIMB 13688) (Methylobacterium extorquens).